A 218-amino-acid polypeptide reads, in one-letter code: N-(5'-phosphoribosyl)anthranilate isomerase (218 aa).

It belongs to the TrpF family.

It catalyses the reaction N-(5-phospho-beta-D-ribosyl)anthranilate = 1-(2-carboxyphenylamino)-1-deoxy-D-ribulose 5-phosphate. It participates in amino-acid biosynthesis; L-tryptophan biosynthesis; L-tryptophan from chorismate: step 3/5. The protein is N-(5'-phosphoribosyl)anthranilate isomerase of Halalkalibacterium halodurans (strain ATCC BAA-125 / DSM 18197 / FERM 7344 / JCM 9153 / C-125) (Bacillus halodurans).